Consider the following 1078-residue polypeptide: Disheveled-associated activator of morphogenesis 1 (1078 aa).

The residue at position 34 (Ser34) is a Phosphoserine. The GBD/FH3 domain maps to Leu45 to Gln420. A coiled-coil region spans residues Arg437–Ser526. 2 disordered regions span residues Arg456 to Lys480 and Cys524 to Ala585. The region spanning Pro528–Lys599 is the FH1 domain. Pro residues-rich tracts occupy residues Gly530 to Pro539 and Leu548 to Ala585. The 410-residue stretch at Lys600–Gln1009 folds into the FH2 domain. Positions Ala693–Arg702 are actin-binding. Residues Lys987 to Ser1027 show a composition bias toward basic and acidic residues. Disordered regions lie at residues Lys987–Asp1034 and Arg1055–Phe1078. Phosphoserine is present on residues Ser1027 and Ser1030. The DAD domain maps to Ser1027–Lys1058. Over residues Ser1067 to Phe1078 the composition is skewed to basic and acidic residues.

Belongs to the formin homology family. In terms of assembly, homodimer. Interacts with CIP4, FNBP1 and FNBP1L. Interacts with the SH3 domains of Abl, BTK, endophilin, spectrin and SRC. Binds specifically to GTP-bound CDC42 and RHOA. Interacts with INTU; INTU mediates the indirect interaction between DAAM1 and NPHP4. Interacts (via coiled coil domain) with KANK1 (via coiled coil domain). In terms of tissue distribution, expressed in all tissues examined.

It is found in the cytoplasm. It localises to the cytoskeleton. Its subcellular location is the cilium basal body. Functionally, binds to disheveled (Dvl) and Rho, and mediates Wnt-induced Dvl-Rho complex formation. May play a role as a scaffolding protein to recruit Rho-GDP and Rho-GEF, thereby enhancing Rho-GTP formation. Can direct nucleation and elongation of new actin filaments. Involved in building functional cilia. Involved in the organization of the subapical actin network in multiciliated epithelial cells. Together with DAAM2, required for myocardial maturation and sarcomere assembly. During cell division, may regulate RHOA activation that signals spindle orientation and chromosomal segregation. The protein is Disheveled-associated activator of morphogenesis 1 (DAAM1) of Homo sapiens (Human).